The primary structure comprises 1242 residues: ATP-dependent helicase/nuclease subunit A (1242 aa).

The UvrD-like helicase ATP-binding domain maps to 12-487 (SRWTDEQWKA…IDLASNFRSR (476 aa)). 33-40 (AAAGSGKT) lines the ATP pocket. One can recognise a UvrD-like helicase C-terminal domain in the interval 514–808 (AAQLKYGADY…RIMTIHSSKG (295 aa)).

The protein belongs to the helicase family. AddA subfamily. As to quaternary structure, heterodimer of AddA and AddB/RexB. The cofactor is Mg(2+).

The catalysed reaction is Couples ATP hydrolysis with the unwinding of duplex DNA by translocating in the 3'-5' direction.. The enzyme catalyses ATP + H2O = ADP + phosphate + H(+). Functionally, the heterodimer acts as both an ATP-dependent DNA helicase and an ATP-dependent, dual-direction single-stranded exonuclease. Recognizes the chi site generating a DNA molecule suitable for the initiation of homologous recombination. The AddA nuclease domain is required for chi fragment generation; this subunit has the helicase and 3' -&gt; 5' nuclease activities. This chain is ATP-dependent helicase/nuclease subunit A, found in Geobacillus kaustophilus (strain HTA426).